The primary structure comprises 123 residues: UPF0738 protein BCE_1319 (123 aa).

Belongs to the UPF0738 family.

The sequence is that of UPF0738 protein BCE_1319 from Bacillus cereus (strain ATCC 10987 / NRS 248).